The sequence spans 315 residues: Ribosomal RNA small subunit methyltransferase H (315 aa).

S-adenosyl-L-methionine is bound by residues 37–39 (GGH), D57, F83, D105, and Q112.

This sequence belongs to the methyltransferase superfamily. RsmH family.

Its subcellular location is the cytoplasm. The enzyme catalyses cytidine(1402) in 16S rRNA + S-adenosyl-L-methionine = N(4)-methylcytidine(1402) in 16S rRNA + S-adenosyl-L-homocysteine + H(+). Specifically methylates the N4 position of cytidine in position 1402 (C1402) of 16S rRNA. This Pseudomonas fluorescens (strain SBW25) protein is Ribosomal RNA small subunit methyltransferase H.